The primary structure comprises 704 residues: MVHVNPIVKSFEYGQHTVTLETGVIARQADAAVLASMGDTTVLVTVVGKKFEEPGRDFFPLTVNYQEKTYAAGKIPGGFFKREGRPSEGETLTARLIDRPIRPLFPNGFKNEVQVIITVVSVDPEISPEVISMIGTSAALSISGIPFNGPLGSARVGYVNGEYILNPTVSQLVDSQLELSVAGTDSAVLMVESEASALPEEVMLGAVVYGHDQQQVVIQAIKELQAEVNKPVWDWAAPVQDETLVAKIKDLAEAGLTEAYQIEVKQDRYAQVGVVKNAAKEALLAENPDANTREIDGLLGSLEKKVVRGRIIAGNPRIDGREPDMVRALNVMAGVLPRTHGSSLFTRGETQALVTCTLGTERDAQKIDSIMGEYTNRFMLHYNFPPYSVGETGMVGSPKRREIGHGKLAWRGINAVMPTAEEFPYSVRIVSEITESNGSSSMASVCGTSLALMDAGVPIKTSVAGIAMGLVKEGDDFVVLSDILGDEDHLGDMDFKVAGTRDGITALQMDIKIEGITKEIMQIALQQAYGARVHILNVMDQAIGSHRGDISEHAPRITTIKINPEKIRDVIGKGGATIRALTEETGTTIELDDDGTVKIASSNGEATKEAIRRIEEITAEVEVGTVYNGKVVRIVDFGAFVTILPGKDGLVHISQIAEERVANVSDYLEVGQEVKVKVMEVDRQGRVRLSMKEAAPKADAPAAE.

Mg(2+)-binding residues include Asp-488 and Asp-494. Residues 555-614 enclose the KH domain; the sequence is PRITTIKINPEKIRDVIGKGGATIRALTEETGTTIELDDDGTVKIASSNGEATKEAIRRI. The S1 motif domain maps to 624–692; that stretch reads GTVYNGKVVR…RQGRVRLSMK (69 aa).

It belongs to the polyribonucleotide nucleotidyltransferase family. In terms of assembly, component of the RNA degradosome, which is a multiprotein complex involved in RNA processing and mRNA degradation. Requires Mg(2+) as cofactor.

It localises to the cytoplasm. The catalysed reaction is RNA(n+1) + phosphate = RNA(n) + a ribonucleoside 5'-diphosphate. Functionally, involved in mRNA degradation. Catalyzes the phosphorolysis of single-stranded polyribonucleotides processively in the 3'- to 5'-direction. The sequence is that of Polyribonucleotide nucleotidyltransferase from Shewanella halifaxensis (strain HAW-EB4).